A 458-amino-acid chain; its full sequence is Probable beta-eliminating lyase (458 aa).

K257 is modified (N6-(pyridoxal phosphate)lysine).

This sequence belongs to the beta-eliminating lyase family. Requires pyridoxal 5'-phosphate as cofactor.

The protein is Probable beta-eliminating lyase of Trichomonas vaginalis (strain ATCC PRA-98 / G3).